The chain runs to 31 residues: Cytochrome b6-f complex subunit 6 (31 aa).

A helical membrane pass occupies residues 4–24 (ITSYFGFLLAALTITPALFIG).

Belongs to the PetL family. As to quaternary structure, the 4 large subunits of the cytochrome b6-f complex are cytochrome b6, subunit IV (17 kDa polypeptide, PetD), cytochrome f and the Rieske protein, while the 4 small subunits are PetG, PetL, PetM and PetN. The complex functions as a dimer.

Its subcellular location is the plastid. The protein resides in the chloroplast thylakoid membrane. Functionally, component of the cytochrome b6-f complex, which mediates electron transfer between photosystem II (PSII) and photosystem I (PSI), cyclic electron flow around PSI, and state transitions. PetL is important for photoautotrophic growth as well as for electron transfer efficiency and stability of the cytochrome b6-f complex. This Saccharum barberi (Indian sugarcane) protein is Cytochrome b6-f complex subunit 6.